Here is a 153-residue protein sequence, read N- to C-terminus: Regulatory protein RecX (153 aa).

Belongs to the RecX family.

The protein localises to the cytoplasm. Functionally, modulates RecA activity. The polypeptide is Regulatory protein RecX (Neisseria meningitidis serogroup C / serotype 2a (strain ATCC 700532 / DSM 15464 / FAM18)).